The following is a 169-amino-acid chain: Ureidoglycolate lyase (169 aa).

This sequence belongs to the ureidoglycolate lyase family. Homodimer. Ni(2+) is required as a cofactor.

The enzyme catalyses (S)-ureidoglycolate = urea + glyoxylate. It participates in nitrogen metabolism; (S)-allantoin degradation. Catalyzes the catabolism of the allantoin degradation intermediate (S)-ureidoglycolate, generating urea and glyoxylate. Involved in the utilization of allantoin as nitrogen source. This is Ureidoglycolate lyase from Brucella melitensis biotype 2 (strain ATCC 23457).